Reading from the N-terminus, the 65-residue chain is Beta-defensin 106A (65 aa).

The signal sequence occupies residues 1–20; the sequence is MRTFLFLFAVLFFLTPAKNA. 3 disulfide bridges follow: cysteine 26/cysteine 53, cysteine 33/cysteine 47, and cysteine 37/cysteine 54.

The protein belongs to the beta-defensin family. As to quaternary structure, monomer. Interacts with CCR2 (via extracellular N-terminal region); this interaction may preferentially require specific tyrosine sulfation on CCR2.

The protein localises to the secreted. Its subcellular location is the membrane. Has antibacterial activity. Acts as a ligand for C-C chemokine receptor CCR2. The chain is Beta-defensin 106A (DEFB106A) from Gorilla gorilla gorilla (Western lowland gorilla).